Consider the following 161-residue polypeptide: MTILVLFLSCAALASAECCSRGDAEVVISEWDQVFNAAMAGSSESAVGVAIFDAFFASSGVSPSMFPGGGDSNNPEFLAQVSRVVSGADIAINSLTNRATCDSLLSHLNAQHRAISGVTGAAVTHLSQAISSVVAQVLPSAHIDAWEYCMAYIAAGIGAGL.

Residues 1-16 (MTILVLFLSCAALASA) form the signal peptide. The Globin domain maps to 18–161 (CCSRGDAEVV…YIAAGIGAGL (144 aa)). The cysteines at positions 19 and 149 are disulfide-linked. Histidine 112 serves as a coordination point for heme b.

The protein belongs to the globin family. In terms of assembly, the 400 kDa hemoglobin consists of a spherical 24-mer arranged as a double layer of dome-shaped dodecamers. Each dodecamer is composed of the 3-fold trimer of the tetramer A1-A2-B1-B2 having one intra-tetramer (A1-B2) disulfide bond and one inter-tetramer (B1-B2) disulfide bond per tetramer.

The protein resides in the secreted. Functionally, the extracellular giant hemoglobin is able to bind and transport oxygen and sulfide simultaneously and reversibly at two different sites. The chain is Extracellular giant hemoglobin major globin subunit B1 (ghbB1) from Oligobrachia mashikoi (Beard worm).